Consider the following 412-residue polypeptide: Adenylosuccinate synthetase (412 aa).

GTP-binding positions include glycine 12–lysine 18 and glycine 40–glutamate 42. The active-site Proton acceptor is the aspartate 13. Mg(2+)-binding residues include aspartate 13 and glycine 40. IMP contacts are provided by residues aspartate 13 to lysine 16, asparagine 38 to histidine 41, arginine 134, asparagine 212, threonine 227, and arginine 291. Catalysis depends on histidine 41, which acts as the Proton donor. Threonine 287–arginine 293 lines the substrate pocket. GTP contacts are provided by residues arginine 293, lysine 318–aspartate 320, and glycine 400–glycine 402.

The protein belongs to the adenylosuccinate synthetase family. As to quaternary structure, homodimer. It depends on Mg(2+) as a cofactor.

It is found in the cytoplasm. It catalyses the reaction IMP + L-aspartate + GTP = N(6)-(1,2-dicarboxyethyl)-AMP + GDP + phosphate + 2 H(+). The protein operates within purine metabolism; AMP biosynthesis via de novo pathway; AMP from IMP: step 1/2. In terms of biological role, plays an important role in the de novo pathway and in the salvage pathway of purine nucleotide biosynthesis. Catalyzes the first committed step in the biosynthesis of AMP from IMP. The polypeptide is Adenylosuccinate synthetase (Fusarium vanettenii (strain ATCC MYA-4622 / CBS 123669 / FGSC 9596 / NRRL 45880 / 77-13-4) (Fusarium solani subsp. pisi)).